A 613-amino-acid chain; its full sequence is Dihydroxy-acid dehydratase (613 aa).

Aspartate 81 is a Mg(2+) binding site. Cysteine 122 serves as a coordination point for [2Fe-2S] cluster. Aspartate 123 and lysine 124 together coordinate Mg(2+). Lysine 124 is modified (N6-carboxylysine). Cysteine 195 is a binding site for [2Fe-2S] cluster. Glutamate 491 provides a ligand contact to Mg(2+). Serine 517 serves as the catalytic Proton acceptor.

It belongs to the IlvD/Edd family. As to quaternary structure, homodimer. [2Fe-2S] cluster is required as a cofactor. The cofactor is Mg(2+).

It catalyses the reaction (2R)-2,3-dihydroxy-3-methylbutanoate = 3-methyl-2-oxobutanoate + H2O. The enzyme catalyses (2R,3R)-2,3-dihydroxy-3-methylpentanoate = (S)-3-methyl-2-oxopentanoate + H2O. The protein operates within amino-acid biosynthesis; L-isoleucine biosynthesis; L-isoleucine from 2-oxobutanoate: step 3/4. It participates in amino-acid biosynthesis; L-valine biosynthesis; L-valine from pyruvate: step 3/4. Its function is as follows. Functions in the biosynthesis of branched-chain amino acids. Catalyzes the dehydration of (2R,3R)-2,3-dihydroxy-3-methylpentanoate (2,3-dihydroxy-3-methylvalerate) into 2-oxo-3-methylpentanoate (2-oxo-3-methylvalerate) and of (2R)-2,3-dihydroxy-3-methylbutanoate (2,3-dihydroxyisovalerate) into 2-oxo-3-methylbutanoate (2-oxoisovalerate), the penultimate precursor to L-isoleucine and L-valine, respectively. The protein is Dihydroxy-acid dehydratase of Vibrio vulnificus (strain CMCP6).